The following is a 424-amino-acid chain: Formyl-CoA:oxalate CoA-transferase (424 aa).

Residues 17 to 18, Arg-38, 96 to 98, Arg-104, and 136 to 139 contribute to the CoA site; these read QS, NFA, and KVYE. The active-site Nucleophile is the Asp-168. Substrate is bound at residue 247–249; that stretch reads GGQ.

It belongs to the CoA-transferase III family. Frc subfamily. Homodimer.

The catalysed reaction is formyl-CoA + oxalate = oxalyl-CoA + formate. The protein operates within metabolic intermediate degradation; oxalate degradation; CO(2) and formate from oxalate: step 1/2. Its function is as follows. Involved in the catabolism of oxalate and in the adapatation to low pH via the induction of the oxalate-dependent acid tolerance response (ATR). Catalyzes the transfer of the CoA moiety from formyl-CoA to oxalate. This chain is Formyl-CoA:oxalate CoA-transferase, found in Afipia carboxidovorans (strain ATCC 49405 / DSM 1227 / KCTC 32145 / OM5) (Oligotropha carboxidovorans).